Here is a 348-residue protein sequence, read N- to C-terminus: 4-hydroxyphenylpyruvate dioxygenase (348 aa).

VOC domains lie at 11-141 (GFAF…ITSS) and 151-303 (AIDH…IFTE). Residues His154, His232, and Glu312 each contribute to the Fe cation site.

It belongs to the 4HPPD family. The cofactor is Fe cation.

It carries out the reaction 3-(4-hydroxyphenyl)pyruvate + O2 = homogentisate + CO2. Its function is as follows. Catalyzes the transformation of p-hydroxyphenylpyruvate into HGA. Has hemolytic and brown pigment production activity. This is 4-hydroxyphenylpyruvate dioxygenase (lly) from Legionella pneumophila (strain Corby).